The following is a 797-amino-acid chain: Cleavage factor two protein 2 (797 aa).

2 disordered regions span residues 519 to 557 (ENDS…EVPS) and 677 to 703 (PSEE…KKEE). Residues 684–703 (KEEVEKKDGDKERNEEKKEE) show a composition bias toward basic and acidic residues.

Component of the cleavage and polyadenylation factor (CPF) complex, which is composed of cft1, cft2, ysh1, pta1, swd2, pfs2, dis2, yth1, ssu72, and fip1.

It is found in the nucleus. Functionally, RNA-binding component of the cleavage and polyadenylation factor (CPF) complex, which plays a key role in polyadenylation-dependent pre-mRNA 3'-end formation and cooperates with cleavage factors including the CFIA complex and NAB4/CFIB. May be involved in poly(A)-site recognition. May be involved in the association of the CPF, CPFIA and RNA polymerase II complexes. In Schizosaccharomyces pombe (strain 972 / ATCC 24843) (Fission yeast), this protein is Cleavage factor two protein 2 (cft2).